A 258-amino-acid chain; its full sequence is Global transcriptional regulator CodY (258 aa).

A GAF domain region spans residues 1 to 156 (MSSLLSKTRR…SATIVGMEML (156 aa)). Positions 204–223 (ASKIADKVGITRSVIVNALR) form a DNA-binding region, H-T-H motif.

It belongs to the CodY family.

It localises to the cytoplasm. Its function is as follows. DNA-binding global transcriptional regulator which is involved in the adaptive response to starvation and acts by directly or indirectly controlling the expression of numerous genes in response to nutrient availability. During rapid exponential growth, CodY is highly active and represses genes whose products allow adaptation to nutrient depletion. In Clostridium botulinum (strain Eklund 17B / Type B), this protein is Global transcriptional regulator CodY.